Consider the following 747-residue polypeptide: Phosphoribosylformylglycinamidine synthase subunit PurL (747 aa).

H46 is a catalytic residue. ATP-binding residues include Y49 and K88. E90 serves as a coordination point for Mg(2+). Residues 91–94 and R113 contribute to the substrate site; that span reads SHNH. Residue H92 is the Proton acceptor of the active site. D114 contributes to the Mg(2+) binding site. Q237 contacts substrate. D265 contacts Mg(2+). Residue 309-311 participates in substrate binding; the sequence is ESQ. Residues D493 and G530 each contribute to the ATP site. N531 provides a ligand contact to Mg(2+). A substrate-binding site is contributed by S533.

Belongs to the FGAMS family. Monomer. Part of the FGAM synthase complex composed of 1 PurL, 1 PurQ and 2 PurS subunits.

Its subcellular location is the cytoplasm. It carries out the reaction N(2)-formyl-N(1)-(5-phospho-beta-D-ribosyl)glycinamide + L-glutamine + ATP + H2O = 2-formamido-N(1)-(5-O-phospho-beta-D-ribosyl)acetamidine + L-glutamate + ADP + phosphate + H(+). Its pathway is purine metabolism; IMP biosynthesis via de novo pathway; 5-amino-1-(5-phospho-D-ribosyl)imidazole from N(2)-formyl-N(1)-(5-phospho-D-ribosyl)glycinamide: step 1/2. In terms of biological role, part of the phosphoribosylformylglycinamidine synthase complex involved in the purines biosynthetic pathway. Catalyzes the ATP-dependent conversion of formylglycinamide ribonucleotide (FGAR) and glutamine to yield formylglycinamidine ribonucleotide (FGAM) and glutamate. The FGAM synthase complex is composed of three subunits. PurQ produces an ammonia molecule by converting glutamine to glutamate. PurL transfers the ammonia molecule to FGAR to form FGAM in an ATP-dependent manner. PurS interacts with PurQ and PurL and is thought to assist in the transfer of the ammonia molecule from PurQ to PurL. The polypeptide is Phosphoribosylformylglycinamidine synthase subunit PurL (Deinococcus radiodurans (strain ATCC 13939 / DSM 20539 / JCM 16871 / CCUG 27074 / LMG 4051 / NBRC 15346 / NCIMB 9279 / VKM B-1422 / R1)).